The primary structure comprises 1059 residues: Disks large-associated protein 2 (1059 aa).

Disordered stretches follow at residues 31–56 (GEPE…EEDI) and 244–311 (TKSH…SDST). Positions 244-261 (TKSHSLEGSSKSNINGTK) are enriched in polar residues. Residues 262-271 (SEGRMDDHHQ) show a composition bias toward basic and acidic residues. Positions 272-285 (SHLSKHSKRSKSKE) are enriched in basic residues. A phosphoserine mark is found at Ser302, Ser308, Ser390, and Ser456. Disordered regions lie at residues 446 to 466 (GDEE…VALR) and 632 to 669 (VTAQ…NSMD). Residues 632-645 (VTAQSSTESTQDAY) are compositionally biased toward polar residues. Ser667, Ser670, Ser673, and Ser720 each carry phosphoserine. A disordered region spans residues 723–756 (VQDSEFPDHQPYPRSDVETATDSDTESRGLREYH). Thr743 is subject to Phosphothreonine. Ser745 is modified (phosphoserine). Positions 747–756 (TESRGLREYH) are enriched in basic and acidic residues. Ser776, Ser811, Ser983, and Ser1012 each carry phosphoserine. A disordered region spans residues 985-1024 (ERKEERKIPPPIPKKPPKGKFPITREKSLDLPDRQRQEAR). The span at 1007-1024 (ITREKSLDLPDRQRQEAR) shows a compositional bias: basic and acidic residues.

Belongs to the SAPAP family. Interacts with DLG4/PSD-95. Expressed in various brain areas.

The protein localises to the cell membrane. The protein resides in the postsynaptic density. It is found in the synapse. Functionally, may play a role in the molecular organization of synapses and neuronal cell signaling. Could be an adapter protein linking ion channel to the subsynaptic cytoskeleton. May induce enrichment of PSD-95/SAP90 at the plasma membrane. The chain is Disks large-associated protein 2 from Rattus norvegicus (Rat).